The primary structure comprises 543 residues: CTP synthase (543 aa).

Residues 1–265 (MTKFIFVTGG…DRLVTDRFRI (265 aa)) form an amidoligase domain region. CTP is bound at residue serine 13. Serine 13 is a binding site for UTP. ATP contacts are provided by residues 14-19 (SLGKGI) and aspartate 71. Residues aspartate 71 and glutamate 139 each contribute to the Mg(2+) site. CTP is bound by residues 146-148 (DIE), 186-191 (KTKPTQ), and lysine 222. UTP contacts are provided by residues 186–191 (KTKPTQ) and lysine 222. Positions 290-541 (EIAMVGKYVD…VEAASQHKQT (252 aa)) constitute a Glutamine amidotransferase type-1 domain. Glycine 351 lines the L-glutamine pocket. The Nucleophile; for glutamine hydrolysis role is filled by cysteine 378. L-glutamine contacts are provided by residues 379–382 (LGMQ), glutamate 402, and arginine 469. Catalysis depends on residues histidine 514 and glutamate 516.

The protein belongs to the CTP synthase family. As to quaternary structure, homotetramer.

It catalyses the reaction UTP + L-glutamine + ATP + H2O = CTP + L-glutamate + ADP + phosphate + 2 H(+). It carries out the reaction L-glutamine + H2O = L-glutamate + NH4(+). The catalysed reaction is UTP + NH4(+) + ATP = CTP + ADP + phosphate + 2 H(+). It functions in the pathway pyrimidine metabolism; CTP biosynthesis via de novo pathway; CTP from UDP: step 2/2. With respect to regulation, allosterically activated by GTP, when glutamine is the substrate; GTP has no effect on the reaction when ammonia is the substrate. The allosteric effector GTP functions by stabilizing the protein conformation that binds the tetrahedral intermediate(s) formed during glutamine hydrolysis. Inhibited by the product CTP, via allosteric rather than competitive inhibition. Its function is as follows. Catalyzes the ATP-dependent amination of UTP to CTP with either L-glutamine or ammonia as the source of nitrogen. Regulates intracellular CTP levels through interactions with the four ribonucleotide triphosphates. This chain is CTP synthase, found in Hydrogenovibrio crunogenus (strain DSM 25203 / XCL-2) (Thiomicrospira crunogena).